A 424-amino-acid chain; its full sequence is MKKVIITPSKLRGSVKIPPSKSMAHRAIICASLSKGESVISNIDFSEDIIATMEGMKSLGANIKVEKDKLIINGENILKDSNYKFIDCNESGSTLRFLVPISLIKDNRVNFIGRGNLGKRPLKTYYEIFEEQEIKYSYEEENLDLNIEGSLKGGEFKVKGNISSQFISGLLFTLPLLKDDSKIIITTELESKGYIDLTLDMIEKFGVTIKNNNYREFLIKGNQSYKPMNYKVEGDYSQAAFYFSAGALGSEINCLDLDLSSYQGDKECIEILEGMGARLIESQERSLSIIHGDLNGTIIDASQCPDIIPVLTVVAALSKGETRIINGERLRIKECDRLNAICTELNKLGADIKELKDGLIINGVKDLIGGEVYSHKDHRIAMSLAIASTRCKKEVIIKEPDCVKKSYPGFWEDFKSLGGILREE.

3-phosphoshikimate is bound by residues Lys-21, Ser-22, and Arg-26. Lys-21 is a phosphoenolpyruvate binding site. Gly-92 and Arg-120 together coordinate phosphoenolpyruvate. Ser-163, Ser-164, Gln-165, Ser-191, Asp-306, and Lys-333 together coordinate 3-phosphoshikimate. Position 165 (Gln-165) interacts with phosphoenolpyruvate. Asp-306 (proton acceptor) is an active-site residue. The phosphoenolpyruvate site is built by Arg-337, Arg-379, and Lys-405.

Belongs to the EPSP synthase family. As to quaternary structure, monomer.

It localises to the cytoplasm. The catalysed reaction is 3-phosphoshikimate + phosphoenolpyruvate = 5-O-(1-carboxyvinyl)-3-phosphoshikimate + phosphate. It functions in the pathway metabolic intermediate biosynthesis; chorismate biosynthesis; chorismate from D-erythrose 4-phosphate and phosphoenolpyruvate: step 6/7. Its function is as follows. Catalyzes the transfer of the enolpyruvyl moiety of phosphoenolpyruvate (PEP) to the 5-hydroxyl of shikimate-3-phosphate (S3P) to produce enolpyruvyl shikimate-3-phosphate and inorganic phosphate. This Clostridium perfringens (strain 13 / Type A) protein is 3-phosphoshikimate 1-carboxyvinyltransferase.